The following is a 481-amino-acid chain: UDP-N-acetylmuramoylalanine--D-glutamate ligase (481 aa).

108-114 (GTNGKTS) provides a ligand contact to ATP.

This sequence belongs to the MurCDEF family.

It is found in the cytoplasm. The catalysed reaction is UDP-N-acetyl-alpha-D-muramoyl-L-alanine + D-glutamate + ATP = UDP-N-acetyl-alpha-D-muramoyl-L-alanyl-D-glutamate + ADP + phosphate + H(+). The protein operates within cell wall biogenesis; peptidoglycan biosynthesis. Its function is as follows. Cell wall formation. Catalyzes the addition of glutamate to the nucleotide precursor UDP-N-acetylmuramoyl-L-alanine (UMA). The polypeptide is UDP-N-acetylmuramoylalanine--D-glutamate ligase (Bifidobacterium longum (strain DJO10A)).